The following is a 150-amino-acid chain: Arginine repressor (150 aa).

It belongs to the ArgR family.

The protein resides in the cytoplasm. Its pathway is amino-acid biosynthesis; L-arginine biosynthesis [regulation]. Its function is as follows. Regulates arginine biosynthesis genes. The polypeptide is Arginine repressor (Staphylococcus saprophyticus subsp. saprophyticus (strain ATCC 15305 / DSM 20229 / NCIMB 8711 / NCTC 7292 / S-41)).